We begin with the raw amino-acid sequence, 356 residues long: Holliday junction branch migration complex subunit RuvB (356 aa).

The segment at 13–201 is large ATPase domain (RuvB-L); the sequence is SSNLSRKTRL…FGITQRLNFY (189 aa). The disordered stretch occupies residues 15–35; that stretch reads NLSRKTRLLDPTPSLEEGKVR. ATP-binding positions include L40, R41, G82, K85, T86, T87, 148 to 150, R191, Y201, and R238; that span reads EDF. T86 contacts Mg(2+). The interval 202–273 is small ATPAse domain (RuvB-S); the sequence is SISDLNRIIQ…LVDKSLTLHQ (72 aa). The interval 276–356 is head domain (RuvB-H); that stretch reads ECGLDQSDRR…NSCKNSPIIK (81 aa). 2 residues coordinate DNA: R331 and R336.

It belongs to the RuvB family. As to quaternary structure, homohexamer. Forms an RuvA(8)-RuvB(12)-Holliday junction (HJ) complex. HJ DNA is sandwiched between 2 RuvA tetramers; dsDNA enters through RuvA and exits via RuvB. An RuvB hexamer assembles on each DNA strand where it exits the tetramer. Each RuvB hexamer is contacted by two RuvA subunits (via domain III) on 2 adjacent RuvB subunits; this complex drives branch migration. In the full resolvosome a probable DNA-RuvA(4)-RuvB(12)-RuvC(2) complex forms which resolves the HJ.

It localises to the cytoplasm. The catalysed reaction is ATP + H2O = ADP + phosphate + H(+). Functionally, the RuvA-RuvB-RuvC complex processes Holliday junction (HJ) DNA during genetic recombination and DNA repair, while the RuvA-RuvB complex plays an important role in the rescue of blocked DNA replication forks via replication fork reversal (RFR). RuvA specifically binds to HJ cruciform DNA, conferring on it an open structure. The RuvB hexamer acts as an ATP-dependent pump, pulling dsDNA into and through the RuvAB complex. RuvB forms 2 homohexamers on either side of HJ DNA bound by 1 or 2 RuvA tetramers; 4 subunits per hexamer contact DNA at a time. Coordinated motions by a converter formed by DNA-disengaged RuvB subunits stimulates ATP hydrolysis and nucleotide exchange. Immobilization of the converter enables RuvB to convert the ATP-contained energy into a lever motion, pulling 2 nucleotides of DNA out of the RuvA tetramer per ATP hydrolyzed, thus driving DNA branch migration. The RuvB motors rotate together with the DNA substrate, which together with the progressing nucleotide cycle form the mechanistic basis for DNA recombination by continuous HJ branch migration. Branch migration allows RuvC to scan DNA until it finds its consensus sequence, where it cleaves and resolves cruciform DNA. The chain is Holliday junction branch migration complex subunit RuvB from Prochlorococcus marinus (strain SARG / CCMP1375 / SS120).